The sequence spans 743 residues: UvrABC system protein C (743 aa).

Residues 16 to 95 enclose the GIY-YIG domain; that stretch reads VDPGVYKFRD…IKEFDPRFNV (80 aa). In terms of domain architecture, UVR spans 208–243; it reads DKLVRQLEARMQQASEELDFETAARLRDDVGALRRA. Disordered regions lie at residues 497–543 and 694–743; these read AEAA…QTGR and PSAD…TGVE. Residues 506-520 are compositionally biased toward acidic residues; that stretch reads QASDTDGDQVSDTDG. Residues 734–743 show a composition bias toward polar residues; that stretch reads QSASQRTGVE.

Belongs to the UvrC family. As to quaternary structure, interacts with UvrB in an incision complex.

Its subcellular location is the cytoplasm. The UvrABC repair system catalyzes the recognition and processing of DNA lesions. UvrC both incises the 5' and 3' sides of the lesion. The N-terminal half is responsible for the 3' incision and the C-terminal half is responsible for the 5' incision. The protein is UvrABC system protein C of Rhodococcus opacus (strain B4).